Here is a 172-residue protein sequence, read N- to C-terminus: Adenine phosphoribosyltransferase (172 aa).

This sequence belongs to the purine/pyrimidine phosphoribosyltransferase family. As to quaternary structure, homodimer.

Its subcellular location is the cytoplasm. The catalysed reaction is AMP + diphosphate = 5-phospho-alpha-D-ribose 1-diphosphate + adenine. It functions in the pathway purine metabolism; AMP biosynthesis via salvage pathway; AMP from adenine: step 1/1. Functionally, catalyzes a salvage reaction resulting in the formation of AMP, that is energically less costly than de novo synthesis. This is Adenine phosphoribosyltransferase from Streptococcus equi subsp. zooepidemicus (strain H70).